Consider the following 464-residue polypeptide: Lysosomal proton-coupled steroid conjugate and bile acid symporter SLC46A3 (464 aa).

Residues 1–26 form the signal peptide; sequence MRKVLLVEPVIFIYIFASSLTSPVVQ. Residues 27 to 71 lie on the Extracellular side of the membrane; sequence QFIYRKLWEEEYNSTAISSDNSSHCERNKSSPTYVMEKAIQEKTS. N-linked (GlcNAc...) asparagine glycosylation is found at N39, N47, and N54. A helical transmembrane segment spans residues 72-92; the sequence is FFNMQLDLTGAVPSLIVAFII. Topologically, residues 93–104 are cytoplasmic; the sequence is VANGDHQGRKKS. A helical membrane pass occupies residues 105-125; it reads LVLPSIGALIADIFLTIVSYF. At 126–130 the chain is on the extracellular side; it reads SWPTS. The helical transmembrane segment at 131–151 threads the bilayer; the sequence is VLFLATFISGLFGSMATFLGG. Residues 152 to 171 lie on the Cytoplasmic side of the membrane; it reads GFAYIADQCHDEKQKTTRIA. A helical membrane pass occupies residues 172–192; the sequence is VIDLIFGVVSGLAGLSSGYFL. Residues 193–198 are Extracellular-facing; the sequence is REMGFT. A helical membrane pass occupies residues 199-219; sequence WTFATASLLHVVNIIYITFFL. Topologically, residues 220-259 are cytoplasmic; that stretch reads QDTVHISEFQQQAPLSYKEHLKETFSGVYMLFKTAPSKKR. Residues 260-280 traverse the membrane as a helical segment; sequence ILIIVLLFIFMTYLFTMFGGS. Residues 281 to 296 lie on the Extracellular side of the membrane; the sequence is SLFTLYELDEPLCWTE. A helical transmembrane segment spans residues 297 to 317; it reads VYIGYGAAAFTSISLTSFLGV. At 318–326 the chain is on the cytoplasmic side; the sequence is YLFSKCLKD. The chain crosses the membrane as a helical span at residues 327 to 347; the sequence is IYIVFIGIFSYIGGIVMAAFA. The Extracellular segment spans residues 348-349; it reads KT. A helical transmembrane segment spans residues 350–370; it reads TLLMFLVRVPSLFSIMPIPVL. Residues 371–384 lie on the Cytoplasmic side of the membrane; the sequence is RSMLSKVVLPSEQG. The helical transmembrane segment at 385–405 threads the bilayer; that stretch reads AVFACIACLEVLTGTISLSVF. The Extracellular portion of the chain corresponds to 406–418; sequence NVIYAATVAWFSG. Residues 419 to 439 traverse the membrane as a helical segment; that stretch reads FSFLLSASLCLIPLGVLCWLL. At 440-464 the chain is on the cytoplasmic side; it reads CTSWNGEDLALLVPEEVSSIDSVDS.

The protein belongs to the major facilitator superfamily. SLC46A family.

The protein localises to the lysosome membrane. It catalyses the reaction estrone 3-sulfate(out) + n H(+)(out) = estrone 3-sulfate(in) + n H(+)(in). It carries out the reaction 25-hydroxyvitamin D3 sulfate(out) + n H(+)(out) = 25-hydroxyvitamin D3 sulfate(in) + n H(+)(in). The enzyme catalyses cholate(out) + n H(+)(out) = cholate(in) + n H(+)(in). The catalysed reaction is glycocholate(out) + n H(+)(out) = glycocholate(in) + n H(+)(in). It catalyses the reaction taurocholate(out) + n H(+)(out) = taurocholate(in) + n H(+)(in). It carries out the reaction dehydroepiandrosterone 3-sulfate(out) + n H(+)(out) = dehydroepiandrosterone 3-sulfate(in) + n H(+)(in). Functionally, lysosomal proton-coupled steroid conjugate and bile acid transporter. Preferentially recognizes lipophilic steroid conjugates or bile acis as endogenous substrates and seems to mediate escape from lysosomes to the cytoplasm. Modulates hepatic cytosolic copper homeostasis, maybe acting as a lysosomal copper transporter and sequestering copper ions in the lysosome. The sequence is that of Lysosomal proton-coupled steroid conjugate and bile acid symporter SLC46A3 (SLC46A3) from Gallus gallus (Chicken).